We begin with the raw amino-acid sequence, 549 residues long: Probable protein kinase UbiB (549 aa).

The 379-residue stretch at 123–501 (DFNETPLASA…QQQAHKSNYL (379 aa)) folds into the Protein kinase domain. Residues 129–137 (LASASISQV) and Lys152 each bind ATP. The Proton acceptor role is filled by Asp287. 2 helical membrane passes run 496–516 (HKSN…TLLI) and 520–540 (ATLW…FVGW).

Belongs to the ABC1 family. UbiB subfamily.

It is found in the cell inner membrane. It participates in cofactor biosynthesis; ubiquinone biosynthesis [regulation]. Its function is as follows. Is probably a protein kinase regulator of UbiI activity which is involved in aerobic coenzyme Q (ubiquinone) biosynthesis. This chain is Probable protein kinase UbiB, found in Shewanella baltica (strain OS185).